We begin with the raw amino-acid sequence, 177 residues long: NADH-quinone oxidoreductase subunit B (177 aa).

Residues C56, C57, C121, and C151 each coordinate [4Fe-4S] cluster.

This sequence belongs to the complex I 20 kDa subunit family. As to quaternary structure, NDH-1 is composed of 14 different subunits. Subunits NuoB, C, D, E, F, and G constitute the peripheral sector of the complex. Requires [4Fe-4S] cluster as cofactor.

It localises to the cell inner membrane. It carries out the reaction a quinone + NADH + 5 H(+)(in) = a quinol + NAD(+) + 4 H(+)(out). Its function is as follows. NDH-1 shuttles electrons from NADH, via FMN and iron-sulfur (Fe-S) centers, to quinones in the respiratory chain. Couples the redox reaction to proton translocation (for every two electrons transferred, four hydrogen ions are translocated across the cytoplasmic membrane), and thus conserves the redox energy in a proton gradient. This chain is NADH-quinone oxidoreductase subunit B, found in Roseobacter denitrificans (strain ATCC 33942 / OCh 114) (Erythrobacter sp. (strain OCh 114)).